Here is an 82-residue protein sequence, read N- to C-terminus: Small ribosomal subunit protein bS18 (82 aa).

This sequence belongs to the bacterial ribosomal protein bS18 family. Part of the 30S ribosomal subunit. Forms a tight heterodimer with protein bS6.

In terms of biological role, binds as a heterodimer with protein bS6 to the central domain of the 16S rRNA, where it helps stabilize the platform of the 30S subunit. The polypeptide is Small ribosomal subunit protein bS18 (Sinorhizobium fredii (strain NBRC 101917 / NGR234)).